Consider the following 283-residue polypeptide: ATP phosphoribosyltransferase (283 aa).

The protein belongs to the ATP phosphoribosyltransferase family. Long subfamily. Mg(2+) is required as a cofactor.

It is found in the cytoplasm. The enzyme catalyses 1-(5-phospho-beta-D-ribosyl)-ATP + diphosphate = 5-phospho-alpha-D-ribose 1-diphosphate + ATP. It participates in amino-acid biosynthesis; L-histidine biosynthesis; L-histidine from 5-phospho-alpha-D-ribose 1-diphosphate: step 1/9. With respect to regulation, feedback inhibited by histidine. In terms of biological role, catalyzes the condensation of ATP and 5-phosphoribose 1-diphosphate to form N'-(5'-phosphoribosyl)-ATP (PR-ATP). Has a crucial role in the pathway because the rate of histidine biosynthesis seems to be controlled primarily by regulation of HisG enzymatic activity. The sequence is that of ATP phosphoribosyltransferase from Azobacteroides pseudotrichonymphae genomovar. CFP2.